The sequence spans 139 residues: uncharacterized protein (139 aa).

A helical transmembrane segment spans residues 22–38; the sequence is SVMSVCFMTMSATVLPI.

Its subcellular location is the membrane. This is an uncharacterized protein from Saccharomyces cerevisiae (strain ATCC 204508 / S288c) (Baker's yeast).